We begin with the raw amino-acid sequence, 210 residues long: Somatotropin-1 (210 aa).

The first 22 residues, 1 to 22 (MGQVFLLMPVLLASCFLSQGAA), serve as a signal peptide directing secretion. Zn(2+) is bound at residue histidine 38. A disulfide bridge links cysteine 71 with cysteine 183. Glutamate 192 is a Zn(2+) binding site. Cysteine 200 and cysteine 208 are disulfide-bonded.

Belongs to the somatotropin/prolactin family.

It localises to the secreted. In terms of biological role, growth hormone plays an important role in growth control and is involved in the regulation of several anabolic processes. Implicated as an osmoregulatory substance important for seawater adaptation. This is Somatotropin-1 (gh1) from Oncorhynchus nerka (Sockeye salmon).